Consider the following 673-residue polypeptide: UvrABC system protein B (673 aa).

One can recognise a Helicase ATP-binding domain in the interval 26 to 414; sequence EGLEDGLAHQ…GGDVVDQVVR (389 aa). 39–46 is an ATP binding site; the sequence is GVTGSGKT. The short motif at 92 to 115 is the Beta-hairpin element; sequence YYDYYQPEAYVPSSDTFIEKDASV. One can recognise a Helicase C-terminal domain in the interval 431–597; that stretch reads QVDDLLSEIR…GLNKKVVDIL (167 aa). The 36-residue stretch at 633–668 folds into the UVR domain; the sequence is LQKIHELEGLMMQHAQNLEFEEAAQIRDQLHQLREL.

This sequence belongs to the UvrB family. Forms a heterotetramer with UvrA during the search for lesions. Interacts with UvrC in an incision complex.

It is found in the cytoplasm. Its function is as follows. The UvrABC repair system catalyzes the recognition and processing of DNA lesions. A damage recognition complex composed of 2 UvrA and 2 UvrB subunits scans DNA for abnormalities. Upon binding of the UvrA(2)B(2) complex to a putative damaged site, the DNA wraps around one UvrB monomer. DNA wrap is dependent on ATP binding by UvrB and probably causes local melting of the DNA helix, facilitating insertion of UvrB beta-hairpin between the DNA strands. Then UvrB probes one DNA strand for the presence of a lesion. If a lesion is found the UvrA subunits dissociate and the UvrB-DNA preincision complex is formed. This complex is subsequently bound by UvrC and the second UvrB is released. If no lesion is found, the DNA wraps around the other UvrB subunit that will check the other stand for damage. This Shigella dysenteriae serotype 1 (strain Sd197) protein is UvrABC system protein B.